A 142-amino-acid polypeptide reads, in one-letter code: Baculoviral IAP repeat-containing protein 5 (142 aa).

A BIR repeat occupies 18-88; sequence RIYTFKNWPF…KHSPGCAFLT (71 aa). Lys-23 is modified (N6-acetyllysine). Thr-34 bears the Phosphothreonine; by CDK1 and CDK15 mark. Thr-48 carries the post-translational modification Phosphothreonine. 4 residues coordinate Zn(2+): Cys-57, Cys-60, His-77, and Cys-84. An N6-acetyllysine mark is found at Lys-90, Lys-110, Lys-112, and Lys-115. A Phosphothreonine; by AURKB modification is found at Thr-117.

It belongs to the IAP family. As to quaternary structure, monomer or homodimer. Exists as a homodimer in the apo state and as a monomer in the CPC-bound state. The monomer protects cells against apoptosis more efficiently than the dimer. Only the dimeric form is capable of enhancing tubulin stability in cells. When phosphorylated, interacts with LAMTOR5/HBXIP; the resulting complex binds pro-CASP9, as well as active CASP9, but much less efficiently. Component of the chromosomal passenger complex (CPC) composed of at least BIRC5/survivin, CDCA8/borealin, INCENP, AURKB or AURKC; in the complex forms a triple-helix bundle-based subcomplex with INCENP and CDCA8. Interacts with JTB. Interacts (via BIR domain) with histone H3 phosphorylated at 'Thr-3' (H3pT3). Interacts with EVI5. Interacts with GTP-bound RAN in both the S and M phases of the cell cycle. Interacts with USP9X. Interacts with tubulin. Interacts with BIRC2/c-IAP1. The monomeric form interacts with XIAP/BIRC4. Both the dimeric and monomeric form can interact with DIABLO/SMAC. Interacts with BIRC6/bruce. Interacts with FBXL7; this interaction facilitates the polyubiquitination and subsequent proteasomal degradation of BIRC5 by the SCF(FBXL7) E3 ubiquitin-protein ligase complex. Ubiquitinated by the Cul9-RING ubiquitin-protein ligase complex, leading to its degradation. Ubiquitination is required for centrosomal targeting. Deubiquitinated by USP35 or USP38; leading to stabilization. Post-translationally, in vitro phosphorylation at Thr-117 by AURKB prevents interaction with INCENP and localization to mitotic chromosomes. Phosphorylation at Thr-48 by CK2 is critical for its mitotic and anti-apoptotic activities. Phosphorylation at Thr-34 by CDK15 is critical for its anti-apoptotic activity.

Its subcellular location is the cytoplasm. It localises to the nucleus. The protein localises to the chromosome. It is found in the centromere. The protein resides in the cytoskeleton. Its subcellular location is the spindle. It localises to the kinetochore. The protein localises to the midbody. Its function is as follows. Multitasking protein that has dual roles in promoting cell proliferation and preventing apoptosis. Component of a chromosome passage protein complex (CPC) which is essential for chromosome alignment and segregation during mitosis and cytokinesis. Acts as an important regulator of the localization of this complex; directs CPC movement to different locations from the inner centromere during prometaphase to midbody during cytokinesis and participates in the organization of the center spindle by associating with polymerized microtubules. Involved in the recruitment of CPC to centromeres during early mitosis via association with histone H3 phosphorylated at 'Thr-3' (H3pT3) during mitosis. The complex with RAN plays a role in mitotic spindle formation by serving as a physical scaffold to help deliver the RAN effector molecule TPX2 to microtubules. May counteract a default induction of apoptosis in G2/M phase. The acetylated form represses STAT3 transactivation of target gene promoters. May play a role in neoplasia. Inhibitor of CASP3 and CASP7. Essential for the maintenance of mitochondrial integrity and function. The chain is Baculoviral IAP repeat-containing protein 5 (Birc5) from Rattus norvegicus (Rat).